The chain runs to 179 residues: Adenine phosphoribosyltransferase (179 aa).

This sequence belongs to the purine/pyrimidine phosphoribosyltransferase family. Homodimer.

It localises to the cytoplasm. It catalyses the reaction AMP + diphosphate = 5-phospho-alpha-D-ribose 1-diphosphate + adenine. It functions in the pathway purine metabolism; AMP biosynthesis via salvage pathway; AMP from adenine: step 1/1. Catalyzes a salvage reaction resulting in the formation of AMP, that is energically less costly than de novo synthesis. This Azorhizobium caulinodans (strain ATCC 43989 / DSM 5975 / JCM 20966 / LMG 6465 / NBRC 14845 / NCIMB 13405 / ORS 571) protein is Adenine phosphoribosyltransferase.